We begin with the raw amino-acid sequence, 569 residues long: Carotenoid cleavage dioxygenase 8 homolog B, chloroplastic (569 aa).

A chloroplast-targeting transit peptide spans 1–43; the sequence is MSPAMLQASSLCVSAALSGAASRPGRLASQGHQGKRAVAQPLA. The tract at residues 23–81 is disordered; that stretch reads RPGRLASQGHQGKRAVAQPLAASAVTEAAPPAPVVAPPARPVDAPRRRGGRGGGGGGGE. A compositionally biased stretch (pro residues) spans 52-62; sequence PPAPVVAPPAR. Positions 251, 301, 368, and 558 each coordinate Fe cation.

The protein belongs to the carotenoid oxygenase family. Requires Fe(2+) as cofactor. As to expression, expressed in parenchyma cells of the root stele, shoot apex, leaf buds, xylem parenchyma cells of the stem, inflorescences and panicles.

It is found in the plastid. Its subcellular location is the chloroplast. The catalysed reaction is 9-cis-10'-apo-beta-carotenal + 2 O2 = (2E,4E,6E)-7-hydroxy-4-methylhepta-2,4,6-trienal + (11R)-carlactone. The enzyme catalyses all-trans-10'-apo-beta-carotenal + O2 = (2E,4E,6E)-4-methylocta-2,4,6-trienedial + 13-apo-beta-carotenone. Involved in strigolactones biosynthesis by cleaving the C(27) 9-cis-10'-apo-beta-carotenal produced by CCD7. Produces the C(19) carlactone and a C(8) hydroxyaldehyde. Also shows lower activity with all-trans-10'-apo-beta-carotenal producing a C(9) dialdehyde and the C(18) 13-apo-beta-carotenone. Strigolactones are hormones that inhibit tillering and shoot branching through the MAX-dependent pathway, contribute to the regulation of shoot architectural response to phosphate-limiting conditions and function as rhizosphere signal that stimulates hyphal branching of arbuscular mycorrhizal fungi and trigger seed germination of root parasitic weeds. This Oryza sativa subsp. japonica (Rice) protein is Carotenoid cleavage dioxygenase 8 homolog B, chloroplastic (CCD8B).